The following is a 653-amino-acid chain: ATP-dependent zinc metalloprotease FtsH 1 (653 aa).

Positions 1–20 are disordered; that stretch reads MPENKNDKENKNDKENKNTK. The Cytoplasmic portion of the chain corresponds to 1 to 30; the sequence is MPENKNDKENKNDKENKNTKEEKKKVKFSN. A helical membrane pass occupies residues 31–51; sequence IIWVYIIFAVFFIGALISLNW. Topologically, residues 52–126 are periplasmic; the sequence is ENNPIISYSE…EYVESVGTKW (75 aa). Residues 127-147 form a helical membrane-spanning segment; sequence WFGLLINIIPIVVMVLFFFWL. Residues 148–653 are Cytoplasmic-facing; sequence YRSASAGARS…VVNHVNYQPV (506 aa). 219–226 is a binding site for ATP; that stretch reads GPPGTGKT. His441 is a binding site for Zn(2+). The active site involves Glu442. Residues His445 and Asp518 each contribute to the Zn(2+) site.

In the central section; belongs to the AAA ATPase family. This sequence in the C-terminal section; belongs to the peptidase M41 family. In terms of assembly, homohexamer. It depends on Zn(2+) as a cofactor.

Its subcellular location is the cell inner membrane. Acts as a processive, ATP-dependent zinc metallopeptidase for both cytoplasmic and membrane proteins. Plays a role in the quality control of integral membrane proteins. The protein is ATP-dependent zinc metalloprotease FtsH 1 of Petrotoga mobilis (strain DSM 10674 / SJ95).